The sequence spans 208 residues: Small ribosomal subunit protein uS4 (208 aa).

One can recognise an S4 RNA-binding domain in the interval 98 to 159 (RRLDNVAYRL…KSRKVAAISE (62 aa)).

This sequence belongs to the universal ribosomal protein uS4 family. As to quaternary structure, part of the 30S ribosomal subunit. Contacts protein S5. The interaction surface between S4 and S5 is involved in control of translational fidelity.

One of the primary rRNA binding proteins, it binds directly to 16S rRNA where it nucleates assembly of the body of the 30S subunit. Functionally, with S5 and S12 plays an important role in translational accuracy. This Geobacter sp. (strain M21) protein is Small ribosomal subunit protein uS4.